Reading from the N-terminus, the 1027-residue chain is Xyloglucanase (1027 aa).

The first 32 residues, M1–A32, serve as a signal peptide directing secretion. The Nucleophile role is filled by D70. BNR repeat units follow at residues R134 to Q143, W185 to K196, Y252 to T262, and F357 to T367. The active-site Proton donor is D479. BNR repeat units follow at residues S537–Y545 and F717–V727. In terms of domain architecture, CBM3 spans P876 to P1027.

The protein belongs to the glycosyl hydrolase 74 family.

Hydrolyzes the glucosidic bonds of unbranched Glc residues in tamarind seed xyloglucan, producing XXXG, XLXG, XXLG and XLLG. May have a dual endo- and exo- mode of action towards xyloglucan, or may have an endo-processive mode of action. This is Xyloglucanase from Paenibacillus sp.